We begin with the raw amino-acid sequence, 168 residues long: Probable chorismate pyruvate-lyase (168 aa).

Residues Arg75, Ile114, and Glu155 each coordinate substrate.

Belongs to the UbiC family.

It is found in the cytoplasm. The catalysed reaction is chorismate = 4-hydroxybenzoate + pyruvate. Its pathway is cofactor biosynthesis; ubiquinone biosynthesis. Its function is as follows. Removes the pyruvyl group from chorismate, with concomitant aromatization of the ring, to provide 4-hydroxybenzoate (4HB) for the ubiquinone pathway. The chain is Probable chorismate pyruvate-lyase from Psychrobacter cryohalolentis (strain ATCC BAA-1226 / DSM 17306 / VKM B-2378 / K5).